Consider the following 230-residue polypeptide: 7-cyano-7-deazaguanine synthase (230 aa).

An ATP-binding site is contributed by 8 to 18 (LSGGMDSAVVT). Residues C186, C196, C199, and C202 each contribute to the Zn(2+) site.

Belongs to the QueC family. The cofactor is Zn(2+).

The catalysed reaction is 7-carboxy-7-deazaguanine + NH4(+) + ATP = 7-cyano-7-deazaguanine + ADP + phosphate + H2O + H(+). Its pathway is purine metabolism; 7-cyano-7-deazaguanine biosynthesis. Its function is as follows. Catalyzes the ATP-dependent conversion of 7-carboxy-7-deazaguanine (CDG) to 7-cyano-7-deazaguanine (preQ(0)). The sequence is that of 7-cyano-7-deazaguanine synthase from Xylella fastidiosa (strain M12).